The chain runs to 599 residues: Aspartate--tRNA(Asp/Asn) ligase (599 aa).

Glu-180 provides a ligand contact to L-aspartate. An aspartate region spans residues 204–207; sequence QLLK. Arg-226 is a binding site for L-aspartate. ATP-binding positions include 226–228 and Gln-235; that span reads RDE. Position 457 (His-457) interacts with L-aspartate. Residue Glu-491 participates in ATP binding. Arg-498 provides a ligand contact to L-aspartate. An ATP-binding site is contributed by 543–546; sequence GWDR. The tract at residues 565–599 is disordered; it reads KAGGGRDPLTGAPAPISDEQRAETGVDYDPDADEN. Over residues 590–599 the composition is skewed to acidic residues; it reads VDYDPDADEN.

The protein belongs to the class-II aminoacyl-tRNA synthetase family. Type 1 subfamily. In terms of assembly, homodimer.

Its subcellular location is the cytoplasm. The enzyme catalyses tRNA(Asx) + L-aspartate + ATP = L-aspartyl-tRNA(Asx) + AMP + diphosphate. Aspartyl-tRNA synthetase with relaxed tRNA specificity since it is able to aspartylate not only its cognate tRNA(Asp) but also tRNA(Asn). Reaction proceeds in two steps: L-aspartate is first activated by ATP to form Asp-AMP and then transferred to the acceptor end of tRNA(Asp/Asn). This is Aspartate--tRNA(Asp/Asn) ligase from Bifidobacterium longum (strain DJO10A).